The primary structure comprises 341 residues: L-threonine 3-dehydrogenase (341 aa).

Cysteine 38 provides a ligand contact to Zn(2+). Active-site charge relay system residues include threonine 40 and histidine 43. The Zn(2+) site is built by histidine 63, glutamate 64, cysteine 93, cysteine 96, cysteine 99, and cysteine 107. Residues isoleucine 175, aspartate 195, arginine 200, leucine 262–isoleucine 264, and isoleucine 286–tyrosine 287 contribute to the NAD(+) site.

The protein belongs to the zinc-containing alcohol dehydrogenase family. Homotetramer. Requires Zn(2+) as cofactor.

The protein resides in the cytoplasm. It carries out the reaction L-threonine + NAD(+) = (2S)-2-amino-3-oxobutanoate + NADH + H(+). The protein operates within amino-acid degradation; L-threonine degradation via oxydo-reductase pathway; glycine from L-threonine: step 1/2. Its function is as follows. Catalyzes the NAD(+)-dependent oxidation of L-threonine to 2-amino-3-ketobutyrate. This chain is L-threonine 3-dehydrogenase, found in Idiomarina loihiensis (strain ATCC BAA-735 / DSM 15497 / L2-TR).